The following is a 157-amino-acid chain: MKKITSFTIDHTKLNPGIYVSRKDTFENVIFTTIDIRIKAPNIEPIIENAAIHTIEHIGATLLRNNEVWAEKIVYFGPMGCRTGFYLIIFGNYESKDLIDLISWLFSEIVNFSEPIPGASHKECGNYKEHNLDMAKYESSKYLQILNNIKEENLKYP.

The Fe cation site is built by H53, H57, and C124.

Belongs to the LuxS family. In terms of assembly, homodimer. The cofactor is Fe cation.

It carries out the reaction S-(5-deoxy-D-ribos-5-yl)-L-homocysteine = (S)-4,5-dihydroxypentane-2,3-dione + L-homocysteine. In terms of biological role, involved in the synthesis of autoinducer 2 (AI-2) which is secreted by bacteria and is used to communicate both the cell density and the metabolic potential of the environment. The regulation of gene expression in response to changes in cell density is called quorum sensing. Catalyzes the transformation of S-ribosylhomocysteine (RHC) to homocysteine (HC) and 4,5-dihydroxy-2,3-pentadione (DPD). The polypeptide is S-ribosylhomocysteine lyase (Borreliella afzelii (strain PKo) (Borrelia afzelii)).